The chain runs to 741 residues: Catalase-peroxidase (741 aa).

Residues 86–208 constitute a cross-link (tryptophyl-tyrosyl-methioninium (Trp-Tyr) (with M-234)); the sequence is WHSAGSYRIF…FAATEMGLIY (123 aa). The active-site Proton acceptor is the His87. A cross-link (tryptophyl-tyrosyl-methioninium (Tyr-Met) (with W-86)) is located at residues 208-234; it reads YVNPEGPGGNPDPLGSAQEIRVAFRRM. His249 is a heme b binding site.

It belongs to the peroxidase family. Peroxidase/catalase subfamily. Homodimer or homotetramer. Heme b is required as a cofactor. In terms of processing, formation of the three residue Trp-Tyr-Met cross-link is important for the catalase, but not the peroxidase activity of the enzyme.

The catalysed reaction is H2O2 + AH2 = A + 2 H2O. It catalyses the reaction 2 H2O2 = O2 + 2 H2O. Functionally, bifunctional enzyme with both catalase and broad-spectrum peroxidase activity. Also displays NADH oxidase, INH lyase and isonicotinoyl-NAD synthase activities. The sequence is that of Catalase-peroxidase from Archaeoglobus fulgidus (strain ATCC 49558 / DSM 4304 / JCM 9628 / NBRC 100126 / VC-16).